The chain runs to 109 residues: Large ribosomal subunit protein uL22 (109 aa).

Belongs to the universal ribosomal protein uL22 family. As to quaternary structure, part of the 50S ribosomal subunit.

This protein binds specifically to 23S rRNA; its binding is stimulated by other ribosomal proteins, e.g. L4, L17, and L20. It is important during the early stages of 50S assembly. It makes multiple contacts with different domains of the 23S rRNA in the assembled 50S subunit and ribosome. Its function is as follows. The globular domain of the protein is located near the polypeptide exit tunnel on the outside of the subunit, while an extended beta-hairpin is found that lines the wall of the exit tunnel in the center of the 70S ribosome. The chain is Large ribosomal subunit protein uL22 from Dehalococcoides mccartyi (strain ATCC BAA-2100 / JCM 16839 / KCTC 5957 / BAV1).